Reading from the N-terminus, the 991-residue chain is Pentatricopeptide repeat-containing protein At1g73710 (991 aa).

Disordered regions lie at residues 1–27 (MLQP…HHHH) and 61–81 (SSSS…RKRK). Basic residues predominate over residues 15–27 (VRHHHHHHHHHHH). Positions 61–73 (SSSSVSPPRCSKP) are enriched in low complexity. PPR repeat units lie at residues 144–178 (NVIH…GVLP), 179–213 (TNNT…MHFP), 214–248 (DEVT…KVDL), 304–338 (LTST…GVPI), 339–373 (DTVT…GISP), 374–408 (DTKT…GLFP), 409–443 (DTVT…SIRI), 444–474 (DEHS…FQLD), 478–513 (SSTT…GQRN), 514–548 (DVLE…GTWP), 549–583 (DECT…GCKP), 584–618 (GCKT…GVKP), 619–653 (NEVV…GVQS), 654–688 (NHIV…EGGP), 689–719 (DVAA…LREK), 723–757 (DVIS…GLLS), 758–792 (DCTS…RKLL), 862–896 (EHFA…GLEP), and 897–931 (DIVT…ELEP). Residues 965-974 (AERECSSRSG) show a composition bias toward basic and acidic residues. The segment at 965–991 (AERECSSRSGEEEEDDEEENSEEDEAF) is disordered. Over residues 975-991 (EEEEDDEEENSEEDEAF) the composition is skewed to acidic residues.

This sequence belongs to the PPR family. P subfamily.

The sequence is that of Pentatricopeptide repeat-containing protein At1g73710 from Arabidopsis thaliana (Mouse-ear cress).